We begin with the raw amino-acid sequence, 586 residues long: Adenine deaminase (586 aa).

The protein belongs to the metallo-dependent hydrolases superfamily. Adenine deaminase family. Mn(2+) is required as a cofactor.

The enzyme catalyses adenine + H2O + H(+) = hypoxanthine + NH4(+). This Bdellovibrio bacteriovorus (strain ATCC 15356 / DSM 50701 / NCIMB 9529 / HD100) protein is Adenine deaminase.